We begin with the raw amino-acid sequence, 105 residues long: Tyrosine-protein phosphatase 12 (105 aa).

Residues 1-105 (WRMIWEKRVE…NLRRIVRTEF (105 aa)) enclose the Tyrosine-protein phosphatase domain. Aspartate 84 contacts substrate.

It belongs to the protein-tyrosine phosphatase family.

It catalyses the reaction O-phospho-L-tyrosyl-[protein] + H2O = L-tyrosyl-[protein] + phosphate. This is Tyrosine-protein phosphatase 12 (STY-12) from Styela plicata (Wrinkled sea squirt).